We begin with the raw amino-acid sequence, 172 residues long: Translationally-controlled tumor protein (172 aa).

The region spanning 1–172 is the TCTP domain; the sequence is MIIYRDLISH…FKDGLEMEKC (172 aa). Serine 46 is modified (phosphoserine; by PLK1). At serine 53 the chain carries Phosphoserine. Position 64 is a phosphoserine; by PLK1 (serine 64). The tract at residues 70–172 is required for reduction of TSC22D1 protein stability; that stretch reads VDIVMNHHLQ…FKDGLEMEKC (103 aa).

The protein belongs to the TCTP family. In terms of assembly, homodimer. Interacts with STEAP3. Interacts with TSC22D1; interaction results in the destabilization of TSC22D1 protein.

The protein localises to the cytoplasm. Involved in calcium binding and microtubule stabilization. Acts as a negative regulator of TSC22D1-mediated apoptosis, via interaction with and destabilization of TSC22D1 protein. The protein is Translationally-controlled tumor protein (TPT1) of Oryctolagus cuniculus (Rabbit).